The sequence spans 81 residues: Photosystem I iron-sulfur center (81 aa).

2 consecutive 4Fe-4S ferredoxin-type domains span residues 2 to 31 (AHTVKIYDTCIGCTQCVRACPTDVLEMVPW) and 37 to 68 (GQIASSPRTEDCVGCKRCETACPTDFLSIRVY). [4Fe-4S] cluster-binding residues include Cys11, Cys14, Cys17, Cys21, Cys48, Cys51, Cys54, and Cys58.

In terms of assembly, the cyanobacterial PSI reaction center is composed of one copy each of PsaA,B,C,D,E,F,I,J,K,L,M and X, and forms trimeric complexes. [4Fe-4S] cluster is required as a cofactor.

It localises to the cellular thylakoid membrane. It carries out the reaction reduced [plastocyanin] + hnu + oxidized [2Fe-2S]-[ferredoxin] = oxidized [plastocyanin] + reduced [2Fe-2S]-[ferredoxin]. In terms of biological role, apoprotein for the two 4Fe-4S centers FA and FB of photosystem I (PSI); essential for photochemical activity. FB is the terminal electron acceptor of PSI, donating electrons to ferredoxin. The C-terminus interacts with PsaA/B/D and helps assemble the protein into the PSI complex. Required for binding of PsaD and PsaE to PSI. PSI is a plastocyanin/cytochrome c6-ferredoxin oxidoreductase, converting photonic excitation into a charge separation, which transfers an electron from the donor P700 chlorophyll pair to the spectroscopically characterized acceptors A0, A1, FX, FA and FB in turn. The chain is Photosystem I iron-sulfur center (psaC) from Synechococcus elongatus.